We begin with the raw amino-acid sequence, 387 residues long: Gibberellic acid methyltransferase 2 (387 aa).

Tyr-33 provides a ligand contact to S-adenosyl-L-homocysteine. Gln-40 serves as a coordination point for gibberellin A4. S-adenosyl-L-homocysteine-binding residues include Cys-74, Asn-79, Asp-113, Leu-114, Ser-146, and Phe-147. Residues His-167 and Trp-168 each contribute to the gibberellin A4 site. Positions 185, 275, 276, 278, and 279 each coordinate Mg(2+).

It belongs to the methyltransferase superfamily. Type-7 methyltransferase family. SABATH subfamily. Mg(2+) serves as cofactor. Expressed in siliques and germinating seeds. Not detected in leaves, stems, flowers and roots.

It catalyses the reaction gibberellin A4 + S-adenosyl-L-methionine = O-methyl gibberellin A4 + S-adenosyl-L-homocysteine. With respect to regulation, down-regulated by Zn(2+), Cu(2+) and Fe(3+). No effect of K(+), NH(4+), Na(+), Ca(2+), Mg(2+), Mn(2+) and Fe(2+). Functionally, methylates the carboxyl group of several gibberellins (GAs). Substrate preference is GA4 &gt; GA34 &gt; GA9 &gt; GA3 &gt; GA1 &gt; GA51 &gt; GA20. No activity with diterpenes abietic acid and ent-kaurenoic acid. This is Gibberellic acid methyltransferase 2 (GAMT2) from Arabidopsis thaliana (Mouse-ear cress).